The following is a 356-amino-acid chain: Tyrosine recombinase XerS (356 aa).

The region spanning 16-121 (LMPWYVLEYY…ALSSLYKYLT (106 aa)) is the Core-binding (CB) domain. One can recognise a Tyr recombinase domain in the interval 169-354 (EFLEYVDCEY…VNDEQKNALD (186 aa)). Residues Arg-210, Lys-234, His-306, Arg-309, and His-332 contribute to the active site. The active-site O-(3'-phospho-DNA)-tyrosine intermediate is the Tyr-341.

The protein belongs to the 'phage' integrase family. XerS subfamily.

It is found in the cytoplasm. Its activity is regulated as follows. FtsK is required for recombination. In terms of biological role, site-specific tyrosine recombinase, which acts by catalyzing the cutting and rejoining of the recombining DNA molecules. Essential to convert dimers of the bacterial chromosome into monomers to permit their segregation at cell division. This chain is Tyrosine recombinase XerS, found in Streptococcus mutans serotype c (strain ATCC 700610 / UA159).